Reading from the N-terminus, the 727-residue chain is Fatty acid oxidation complex subunit alpha (727 aa).

The tract at residues 1-200 (MNDQQPFSAI…RQGLVDEAVP (200 aa)) is enoyl-CoA hydratase. The tract at residues 316–727 (KPIHYVGILG…PPTDEDDSAS (412 aa)) is 3-hydroxyacyl-CoA dehydrogenase.

The protein in the N-terminal section; belongs to the enoyl-CoA hydratase/isomerase family. This sequence in the central section; belongs to the 3-hydroxyacyl-CoA dehydrogenase family. As to quaternary structure, heterotetramer of two alpha chains (FadJ) and two beta chains (FadI).

The protein resides in the cytoplasm. The enzyme catalyses a (3S)-3-hydroxyacyl-CoA = a (2E)-enoyl-CoA + H2O. It catalyses the reaction a 4-saturated-(3S)-3-hydroxyacyl-CoA = a (3E)-enoyl-CoA + H2O. The catalysed reaction is a (3S)-3-hydroxyacyl-CoA + NAD(+) = a 3-oxoacyl-CoA + NADH + H(+). It carries out the reaction (3S)-3-hydroxybutanoyl-CoA = (3R)-3-hydroxybutanoyl-CoA. It participates in lipid metabolism; fatty acid beta-oxidation. Catalyzes the formation of a hydroxyacyl-CoA by addition of water on enoyl-CoA. Also exhibits 3-hydroxyacyl-CoA epimerase and 3-hydroxyacyl-CoA dehydrogenase activities. The chain is Fatty acid oxidation complex subunit alpha from Pectobacterium carotovorum subsp. carotovorum (strain PC1).